We begin with the raw amino-acid sequence, 1347 residues long: DExH-box ATP-dependent RNA helicase DExH11 (1347 aa).

Positions Glu263 to Glu291 are disordered. Over residues Asp267–Ala284 the composition is skewed to basic and acidic residues. Positions Ile369 to Ile524 constitute a Helicase ATP-binding domain. Ala382–Thr389 provides a ligand contact to ATP. Positions Asp472 to His475 match the DEVH box motif. The tract at residues Ser566–Asn625 is disordered. Positions Asp590–Ser601 are enriched in basic and acidic residues. Positions Asp673 to Leu838 constitute a Helicase C-terminal domain.

It belongs to the DExH box helicase family. SKI2 subfamily. In terms of assembly, component of the cytoplasmic SKI complex, which consists of SKI2, SKI3 and VIP3/SKI8. In terms of tissue distribution, expressed in vascular tissues of leaves and roots of young plants.

Its subcellular location is the cytoplasm. The catalysed reaction is ATP + H2O = ADP + phosphate + H(+). Component of the SKI complex which is thought to be involved in exosome-mediated RNA decay and associates with transcriptionally active genes in a manner dependent on PAF1 complex (PAF1C). Involved in the regulation of potassium deprivation stress response. In Arabidopsis thaliana (Mouse-ear cress), this protein is DExH-box ATP-dependent RNA helicase DExH11.